Reading from the N-terminus, the 105-residue chain is Large ribosomal subunit protein uL24 (105 aa).

This sequence belongs to the universal ribosomal protein uL24 family. Part of the 50S ribosomal subunit.

Its function is as follows. One of two assembly initiator proteins, it binds directly to the 5'-end of the 23S rRNA, where it nucleates assembly of the 50S subunit. One of the proteins that surrounds the polypeptide exit tunnel on the outside of the subunit. The chain is Large ribosomal subunit protein uL24 from Mycobacterium sp. (strain JLS).